We begin with the raw amino-acid sequence, 275 residues long: Formamidopyrimidine-DNA glycosylase (275 aa).

Proline 2 functions as the Schiff-base intermediate with DNA in the catalytic mechanism. The active-site Proton donor is glutamate 3. Lysine 58 serves as the catalytic Proton donor; for beta-elimination activity. The DNA site is built by histidine 91, arginine 109, and arginine 154. The FPG-type zinc finger occupies 240 to 274 (AVYERAGLPCRVCGTPIRRLVQGQRATYFCPSCQK). Residue arginine 264 is the Proton donor; for delta-elimination activity of the active site.

The protein belongs to the FPG family. Monomer. Requires Zn(2+) as cofactor.

The enzyme catalyses Hydrolysis of DNA containing ring-opened 7-methylguanine residues, releasing 2,6-diamino-4-hydroxy-5-(N-methyl)formamidopyrimidine.. It catalyses the reaction 2'-deoxyribonucleotide-(2'-deoxyribose 5'-phosphate)-2'-deoxyribonucleotide-DNA = a 3'-end 2'-deoxyribonucleotide-(2,3-dehydro-2,3-deoxyribose 5'-phosphate)-DNA + a 5'-end 5'-phospho-2'-deoxyribonucleoside-DNA + H(+). Involved in base excision repair of DNA damaged by oxidation or by mutagenic agents. Acts as a DNA glycosylase that recognizes and removes damaged bases. Has a preference for oxidized purines, such as 7,8-dihydro-8-oxoguanine (8-oxoG). Has AP (apurinic/apyrimidinic) lyase activity and introduces nicks in the DNA strand. Cleaves the DNA backbone by beta-delta elimination to generate a single-strand break at the site of the removed base with both 3'- and 5'-phosphates. This Bordetella pertussis (strain Tohama I / ATCC BAA-589 / NCTC 13251) protein is Formamidopyrimidine-DNA glycosylase.